A 257-amino-acid chain; its full sequence is Type III pantothenate kinase (257 aa).

Aspartate 7–valine 14 provides a ligand contact to ATP. Glycine 106–arginine 109 is a substrate binding site. Aspartate 108 functions as the Proton acceptor in the catalytic mechanism. Aspartate 128 is a K(+) binding site. Threonine 132 is an ATP binding site. Threonine 184 lines the substrate pocket.

It belongs to the type III pantothenate kinase family. In terms of assembly, homodimer. NH4(+) is required as a cofactor. The cofactor is K(+).

The protein localises to the cytoplasm. The enzyme catalyses (R)-pantothenate + ATP = (R)-4'-phosphopantothenate + ADP + H(+). The protein operates within cofactor biosynthesis; coenzyme A biosynthesis; CoA from (R)-pantothenate: step 1/5. Catalyzes the phosphorylation of pantothenate (Pan), the first step in CoA biosynthesis. The polypeptide is Type III pantothenate kinase (Nocardioides sp. (strain ATCC BAA-499 / JS614)).